Consider the following 249-residue polypeptide: tRNA pseudouridine synthase A (249 aa).

D53 acts as the Nucleophile in catalysis. Substrate is bound at residue Y111.

It belongs to the tRNA pseudouridine synthase TruA family. In terms of assembly, homodimer.

It catalyses the reaction uridine(38/39/40) in tRNA = pseudouridine(38/39/40) in tRNA. Its function is as follows. Formation of pseudouridine at positions 38, 39 and 40 in the anticodon stem and loop of transfer RNAs. This is tRNA pseudouridine synthase A from Streptococcus pneumoniae serotype 2 (strain D39 / NCTC 7466).